We begin with the raw amino-acid sequence, 357 residues long: Glucose-6-phosphatase catalytic subunit 1 (357 aa).

The Lumenal segment spans residues 1 to 28 (MEEGMNILHDFGIQSTRYLQVNYQDSQD). The chain crosses the membrane as a helical span at residues 29–49 (WFILVSVIADLRNAFYVLFPI). At 50-60 (WFHLKETVGIN) the chain is on the cytoplasmic side. The helical transmembrane segment at 61-81 (LLWVAVVGDWFNLVFKWILFG) threads the bilayer. Topologically, residues 82–117 (QRPYWWVLDTDYYSNSSVPIIKQFPVTCETGPGSPS) are lumenal. A substrate-binding site is contributed by Arg-83. Asn-96 carries an N-linked (GlcNAc...) asparagine glycan. The helical transmembrane segment at 118–138 (GHAMGAAGVYYVMVTSTLAIF) threads the bilayer. His-119 functions as the Proton donor in the catalytic mechanism. Topologically, residues 139–147 (RGKKKPTYG) are cytoplasmic. Residues 148–168 (FRCLNVILWLGFWAVQLNVCL) traverse the membrane as a helical segment. The Lumenal segment spans residues 169–179 (SRIYLAAHFPH). A substrate-binding site is contributed by Arg-170. Residue His-176 is the Nucleophile of the active site. A helical membrane pass occupies residues 180-202 (QVVAGVLSGIAVAETFSHIRGIY). Residues 203–211 (NASLRKYCL) are Cytoplasmic-facing. The helical transmembrane segment at 212–232 (ITIFLFGFALGFYLLLKGLGV) threads the bilayer. At 233-254 (DLLWTLEKAKRWCERPEWVHLD) the chain is on the lumenal side. Residues 255-275 (TTPFASLFKNLGTLLGLGLAL) form a helical membrane-spanning segment. At 276 to 291 (NSSMYRKSCKGELSKL) the chain is on the cytoplasmic side. Residues 292 to 312 (LPFRFACIVASLVLLHLFDSL) traverse the membrane as a helical segment. At 313 to 320 (KPPSQVEL) the chain is on the lumenal side. The helical transmembrane segment at 321–341 (IFYILSFCKSATVPFASVSLI) threads the bilayer. The Cytoplasmic portion of the chain corresponds to 342-357 (PYCLARILGQTHKKSL). The Prevents secretion from ER motif lies at 354 to 357 (KKSL).

This sequence belongs to the glucose-6-phosphatase family. In terms of tissue distribution, liver and kidney.

The protein localises to the endoplasmic reticulum membrane. The catalysed reaction is D-glucose 6-phosphate + H2O = D-glucose + phosphate. It functions in the pathway carbohydrate biosynthesis; gluconeogenesis. Functionally, hydrolyzes glucose-6-phosphate to glucose in the endoplasmic reticulum. Forms with the glucose-6-phosphate transporter (SLC37A4/G6PT) the complex responsible for glucose production in the terminal step of glycogenolysis and gluconeogenesis. Hence, it is the key enzyme in homeostatic regulation of blood glucose levels. In Mus musculus (Mouse), this protein is Glucose-6-phosphatase catalytic subunit 1 (G6pc1).